A 149-amino-acid polypeptide reads, in one-letter code: Transcriptional repressor NrdR (149 aa).

The segment at 3–34 is a zinc-finger region; it reads CPFCDTEETKVIDSRLVSDGYQVRRRRECGHC. Positions 49–139 constitute an ATP-cone domain; it reads PKIIKTDGTR…VYLSFDDIDQ (91 aa).

Belongs to the NrdR family. Zn(2+) is required as a cofactor.

In terms of biological role, negatively regulates transcription of bacterial ribonucleotide reductase nrd genes and operons by binding to NrdR-boxes. The sequence is that of Transcriptional repressor NrdR from Haemophilus influenzae (strain PittEE).